A 552-amino-acid polypeptide reads, in one-letter code: Mothers against decapentaplegic homolog 4 (552 aa).

The interval 1 to 322 is mediates interaction with ZBTB7A; the sequence is MDNMSITNTP…PISNHPAPEY (322 aa). In terms of domain architecture, MH1 spans 18–142; it reads SIVHSLMCHR…YERVVSPGID (125 aa). Lys-37 is modified (N6-acetyllysine). The tract at residues 44-69 is required for interaction with TSC22D1; sequence VKKLKEKKDELDSLITAITTNGAHPS. Cys-71 is a binding site for Zn(2+). A Glycyl lysine isopeptide (Lys-Gly) (interchain with G-Cter in SUMO2) cross-link involves residue Lys-113. Zn(2+) contacts are provided by Cys-115, Cys-127, and His-132. Disordered regions lie at residues 168-194 and 236-256; these read GQPSLSTEGHSIQTIQHPPSNRASTET and GLLQIASGPQPGQQQNGFTGQ. 2 stretches are compositionally biased toward polar residues: residues 170–194 and 245–256; these read PSLSTEGHSIQTIQHPPSNRASTET and QPGQQQNGFTGQ. Residues 275-320 form an SAD region; it reads PYTPNLPHHQNGHLQHHPPMPPHPGHYWPVHNELAFQPPISNHPAP. One can recognise an MH2 domain in the interval 323-552; the sequence is WCSIAYFEMD…MPIADPQPLD (230 aa). 2 positions are modified to N6-acetyllysine: Lys-428 and Lys-507. Lys-519 is covalently cross-linked (Glycyl lysine isopeptide (Lys-Gly) (interchain with G-Cter in ubiquitin)).

Belongs to the dwarfin/SMAD family. In terms of assembly, monomer; in the absence of TGF-beta activation. Heterotrimer; on TGF-beta activation. Heterotrimer composed of two molecules of a C-terminally phosphorylated R-SMAD molecule, SMAD2 or SMAD3, and one molecule of SMAD4 to form the transcriptional active SMAD2/SMAD3-SMAD4 complex. Found in a ternary complex composed of SMAD4, STK11/LKB1 and STK11IP. Found in a complex with SMAD1 and YY1. Identified in a complex that contains at least ZNF451, SMAD2, SMAD3 and SMAD4. Interacts with ATF2, COPS5, DACH1, MSG1, SKI, STK11/LKB1, STK11IP and TRIM33. Associates with ZNF423 or ZNF521 in response to BMP2 leading to activate transcription of BMP target genes. Interacts with USP9X. Interacts (via the MH1 and MH2 domains) with RBPMS. Interacts with WWTR1 (via coiled-coil domain). Interacts with CITED1 and CITED2. Interacts with PDPK1 (via PH domain). Interacts with VPS39; this interaction affects heterodimer formation with SMAD3, but not with SMAD2, and leads to inhibition of SMAD3-dependent transcription activation. Interactions with VPS39 and SMAD2 may be mutually exclusive. Interacts (via MH2 domain) with ZNF451 (via N-terminal zinc-finger domains). Interacts with ZC3H3. Interacts weakly with ZNF8. Interacts with NUP93 and IPO7; translocates SMAD4 to the nucleus through the NPC upon BMP7 stimulation resulting in activation of SMAD4 signaling. Interacts with CREB3L1, the interaction takes place upon TGFB1 induction and SMAD4 acts as a CREB3L1 coactivator to induce the expression of genes involved in the assembly of collagen extracellular matrix. Interacts with DLX1. Interacts with ZBTB7A; the interaction is direct and stimulated by TGFB1. Interacts with CREBBP; the recruitment of this transcriptional coactivator is negatively regulated by ZBTB7A. Interacts with EP300; the interaction with this transcriptional coactivator is negatively regulated by ZBTB7A. Interacts with HDAC1. Interacts (via MH2 domain) with ZMIZ1 (via SP-RING-type domain); in the TGF-beta signaling pathway increases the activity of the SMAD3/SMAD4 transcriptional complex. Interacts (via N-terminus) with TSC22D1. In terms of processing, phosphorylated by PDPK1. Monoubiquitinated on Lys-519 by E3 ubiquitin-protein ligase TRIM33. Monoubiquitination hampers its ability to form a stable complex with activated SMAD2/3 resulting in inhibition of TGF-beta/BMP signaling cascade. Deubiquitination by USP9X restores its competence to mediate TGF-beta signaling.

The protein resides in the cytoplasm. Its subcellular location is the nucleus. Its function is as follows. In muscle physiology, plays a central role in the balance between atrophy and hypertrophy. When recruited by MSTN, promotes atrophy response via phosphorylated SMAD2/4. MSTN decrease causes SMAD4 release and subsequent recruitment by the BMP pathway to promote hypertrophy via phosphorylated SMAD1/5/8. Acts synergistically with SMAD1 and YY1 in bone morphogenetic protein (BMP)-mediated cardiac-specific gene expression. Binds to SMAD binding elements (SBEs) (5'-GTCT/AGAC-3') within BMP response element (BMPRE) of cardiac activating regions. Common SMAD (co-SMAD) is the coactivator and mediator of signal transduction by TGF-beta (transforming growth factor). Component of the heterotrimeric SMAD2/SMAD3-SMAD4 complex that forms in the nucleus and is required for the TGF-mediated signaling. Promotes binding of the SMAD2/SMAD4/FAST-1 complex to DNA and provides an activation function required for SMAD1 or SMAD2 to stimulate transcription. Component of the multimeric SMAD3/SMAD4/JUN/FOS complex which forms at the AP1 promoter site; required for synergistic transcriptional activity in response to TGF-beta. May act as a tumor suppressor. Positively regulates PDPK1 kinase activity by stimulating its dissociation from the 14-3-3 protein YWHAQ which acts as a negative regulator. This chain is Mothers against decapentaplegic homolog 4 (SMAD4), found in Homo sapiens (Human).